A 114-amino-acid chain; its full sequence is MEKNPLAAPLLILWFHLDCVSSILNVEQSPQSLHVQEGDSTNFTCSFPSSNFYALHWYRWETAKSPEALFVMTLNGDEKKKGRISATLNTKEGYSYLYIKGSQPEDSATYLCAF.

Residues 1 to 22 form the signal peptide; it reads MEKNPLAAPLLILWFHLDCVSS. The Ig-like domain maps to 23–114; that stretch reads ILNVEQSPQS…EDSATYLCAF (92 aa). Residue N42 is glycosylated (N-linked (GlcNAc...) asparagine). C45 and C112 are joined by a disulfide.

In terms of assembly, alpha-beta TR is a heterodimer composed of an alpha and beta chain; disulfide-linked. The alpha-beta TR is associated with the transmembrane signaling CD3 coreceptor proteins to form the TR-CD3 (TcR or TCR). The assembly of alpha-beta TR heterodimers with CD3 occurs in the endoplasmic reticulum where a single alpha-beta TR heterodimer associates with one CD3D-CD3E heterodimer, one CD3G-CD3E heterodimer and one CD247 homodimer forming a stable octameric structure. CD3D-CD3E and CD3G-CD3E heterodimers preferentially associate with TR alpha and TR beta chains, respectively. The association of the CD247 homodimer is the last step of TcR assembly in the endoplasmic reticulum and is required for transport to the cell surface.

It localises to the cell membrane. Functionally, v region of the variable domain of T cell receptor (TR) alpha chain that participates in the antigen recognition. Alpha-beta T cell receptors are antigen specific receptors which are essential to the immune response and are present on the cell surface of T lymphocytes. Recognize peptide-major histocompatibility (MH) (pMH) complexes that are displayed by antigen presenting cells (APC), a prerequisite for efficient T cell adaptive immunity against pathogens. Binding of alpha-beta TR to pMH complex initiates TR-CD3 clustering on the cell surface and intracellular activation of LCK that phosphorylates the ITAM motifs of CD3G, CD3D, CD3E and CD247 enabling the recruitment of ZAP70. In turn ZAP70 phosphorylates LAT, which recruits numerous signaling molecules to form the LAT signalosome. The LAT signalosome propagates signal branching to three major signaling pathways, the calcium, the mitogen-activated protein kinase (MAPK) kinase and the nuclear factor NF-kappa-B (NF-kB) pathways, leading to the mobilization of transcription factors that are critical for gene expression and essential for T cell growth and differentiation. The T cell repertoire is generated in the thymus, by V-(D)-J rearrangement. This repertoire is then shaped by intrathymic selection events to generate a peripheral T cell pool of self-MH restricted, non-autoaggressive T cells. Post-thymic interaction of alpha-beta TR with the pMH complexes shapes TR structural and functional avidity. The chain is T cell receptor alpha variable 24 from Homo sapiens (Human).